The following is a 483-amino-acid chain: ATP synthase subunit beta (483 aa).

ATP is bound at residue 162 to 169 (GGAGVGKT).

Belongs to the ATPase alpha/beta chains family. F-type ATPases have 2 components, CF(1) - the catalytic core - and CF(0) - the membrane proton channel. CF(1) has five subunits: alpha(3), beta(3), gamma(1), delta(1), epsilon(1). CF(0) has four main subunits: a(1), b(1), b'(1) and c(9-12).

It is found in the cellular thylakoid membrane. The catalysed reaction is ATP + H2O + 4 H(+)(in) = ADP + phosphate + 5 H(+)(out). In terms of biological role, produces ATP from ADP in the presence of a proton gradient across the membrane. The catalytic sites are hosted primarily by the beta subunits. The chain is ATP synthase subunit beta from Synechocystis sp. (strain ATCC 27184 / PCC 6803 / Kazusa).